A 434-amino-acid chain; its full sequence is Nuclear receptor subfamily 1 group I member 2 (434 aa).

The nuclear receptor DNA-binding region spans 38-107 (PQICRVCGDK…RLRKCLESGM (70 aa)). NR C4-type zinc fingers lie at residues 41 to 61 (CRVC…CEGC) and 77 to 102 (CPFR…LRKC). Residues 66–92 (RRAMKRNARLRCPFRKGACEITRKTRR) carry the Bipartite nuclear localization signal motif. The tract at residues 108–145 (KKEMIMSDAAVEERRALIKRKKRERIGTQPPGVQGLTE) is hinge. The NR LBD domain maps to 146 to 433 (EQRMMIRELM…LMQELFGITG (288 aa)). Residues Ser-247, 285–288 (QLRF), and His-407 contribute to the hyperforin site.

It belongs to the nuclear hormone receptor family. NR1 subfamily. Heterodimer with RXRA. Interacts with NCOA1. Interacts (via domain NR LBD) with CRY1 and CRY2 in a ligand-dependent manner.

It is found in the nucleus. Its function is as follows. Nuclear receptor that binds and is activated by a variety of endogenous and xenobiotic compounds. Transcription factor that activates the transcription of multiple genes involved in the metabolism and secretion of potentially harmful xenobiotics, endogenous compounds and drugs. Response to specific ligands is species-specific, due to differences in the ligand-binding domain. Activated by naturally occurring steroids, such as pregnenolone and progesterone. Binds to a response element in the promoters of the CYP3A4 and ABCB1/MDR1 genes. The chain is Nuclear receptor subfamily 1 group I member 2 (NR1I2) from Macaca mulatta (Rhesus macaque).